A 310-amino-acid chain; its full sequence is Olfactory receptor 2A14 (310 aa).

Topologically, residues Met1–Ile24 are extracellular. Asn4 carries N-linked (GlcNAc...) asparagine glycosylation. Residues Leu25–Ile48 form a helical membrane-spanning segment. Residues Cys49–Thr56 are Cytoplasmic-facing. A helical transmembrane segment spans residues Pro57–Pro78. Over Lys79–Gln99 the chain is Extracellular. Residues Cys96 and Cys188 are joined by a disulfide bond. A helical membrane pass occupies residues Thr100 to Tyr119. Topologically, residues Asp120–Arg138 are cytoplasmic. The chain crosses the membrane as a helical span at residues Val139–Val157. Topologically, residues Pro158–Asn194 are extracellular. A helical membrane pass occupies residues Gln195–Leu218. At Arg219–Lys235 the chain is on the cytoplasmic side. Residues Ala236–Tyr258 form a helical membrane-spanning segment. Over Met259–Lys271 the chain is Extracellular. The helical transmembrane segment at Val272–Leu291 threads the bilayer. Residues Arg292 to Thr310 are Cytoplasmic-facing.

This sequence belongs to the G-protein coupled receptor 1 family.

The protein localises to the cell membrane. In terms of biological role, odorant receptor. The protein is Olfactory receptor 2A14 (OR2A14) of Homo sapiens (Human).